A 313-amino-acid chain; its full sequence is tRNA dimethylallyltransferase (313 aa).

An ATP-binding site is contributed by 20 to 27; it reads GPTGTGKS. 22–27 serves as a coordination point for substrate; that stretch reads TGTGKS.

It belongs to the IPP transferase family. As to quaternary structure, monomer. The cofactor is Mg(2+).

The enzyme catalyses adenosine(37) in tRNA + dimethylallyl diphosphate = N(6)-dimethylallyladenosine(37) in tRNA + diphosphate. Functionally, catalyzes the transfer of a dimethylallyl group onto the adenine at position 37 in tRNAs that read codons beginning with uridine, leading to the formation of N6-(dimethylallyl)adenosine (i(6)A). In Kocuria rhizophila (strain ATCC 9341 / DSM 348 / NBRC 103217 / DC2201), this protein is tRNA dimethylallyltransferase.